A 467-amino-acid polypeptide reads, in one-letter code: Glycogen synthase kinase-3 (467 aa).

Positions 1–20 are enriched in basic and acidic residues; sequence MSSKDQILEKDKKETDDNGN. The interval 1–42 is disordered; that stretch reads MSSKDQILEKDKKETDDNGNKKTTTTTSSSSSSSSSSKPRSN. Over residues 23 to 37 the composition is skewed to low complexity; it reads TTTTTSSSSSSSSSS. Residues 56-339 form the Protein kinase domain; sequence YITEGVIGNG…PVEICAHPFF (284 aa). ATP-binding positions include 62–70 and K85; that span reads IGNGSFGVV. Catalysis depends on D179, which acts as the Proton acceptor. A phosphotyrosine; by zakA mark is found at Y214 and Y220. A disordered region spans residues 400-467; sequence SSNQSSSSNS…TTTTTTTSNH (68 aa).

Belongs to the protein kinase superfamily. CMGC Ser/Thr protein kinase family. GSK-3 subfamily. The cofactor is Mg(2+).

It catalyses the reaction L-seryl-[tau protein] + ATP = O-phospho-L-seryl-[tau protein] + ADP + H(+). The enzyme catalyses L-threonyl-[tau protein] + ATP = O-phospho-L-threonyl-[tau protein] + ADP + H(+). Inhibited by lithium. Lithium inhibition is competitive with respect to magnesium but non-competitive with respect to the peptide substrate. Functionally, during cellular differentiation, may mediate an extracellular cyclic AMP stimulated signal transduction pathway that regulates prespore and prestalk B-cell proportions through inhibition of stalk cell formation and induction of prespore cell differentiation. The cAMP receptor carC appears to activate gskA via the tyrosine kinases zakA and zak2, to stimulate prespore differentiation, while carD appears to negatively regulate gskA, to promote prestalk formation. The chain is Glycogen synthase kinase-3 (gskA) from Dictyostelium discoideum (Social amoeba).